The sequence spans 138 residues: Large ribosomal subunit protein uL16 (138 aa).

Residues 1 to 13 (MLQPKRRKYRKEQ) show a composition bias toward basic residues. The disordered stretch occupies residues 1–20 (MLQPKRRKYRKEQKGRNTGI).

The protein belongs to the universal ribosomal protein uL16 family. As to quaternary structure, part of the 50S ribosomal subunit.

Binds 23S rRNA and is also seen to make contacts with the A and possibly P site tRNAs. This chain is Large ribosomal subunit protein uL16, found in Paraburkholderia phytofirmans (strain DSM 17436 / LMG 22146 / PsJN) (Burkholderia phytofirmans).